The primary structure comprises 155 residues: Small ribosomal subunit protein uS7cz/uS7cy (155 aa).

Belongs to the universal ribosomal protein uS7 family. In terms of assembly, part of the 30S ribosomal subunit.

It is found in the plastid. Its subcellular location is the chloroplast. Functionally, one of the primary rRNA binding proteins, it binds directly to 16S rRNA where it nucleates assembly of the head domain of the 30S subunit. The polypeptide is Small ribosomal subunit protein uS7cz/uS7cy (rps7-A) (Daucus carota (Wild carrot)).